We begin with the raw amino-acid sequence, 234 residues long: MAENHCELLPPAPGGLGAGLGGGLCRRCSAGLGALAQRPGSVSKWVRLNVGGTYFLTTRQTLCRDPKSFLYRLCQADPDLDSDKDETGAYLIDRDPTYFGPVLNYLRHGKLVINKDLAEEGVLEEAEFYNITSLIKLVKDKIRERDSKTSQVPLKHVYRVLQCQEEELTQMVSTMSDGWKFEQLVSIGSSYNYGSEDQAEFLCVVSKELHNSPHGPASEPSEKAKILQERGSRM.

Ala2 is subject to N-acetylalanine. Residues 44 to 146 (KWVRLNVGGT…LVKDKIRERD (103 aa)) form the BTB domain. The tract at residues 211-234 (NSPHGPASEPSEKAKILQERGSRM) is disordered. Over residues 220–234 (PSEKAKILQERGSRM) the composition is skewed to basic and acidic residues.

As to quaternary structure, homopentamer. Interacts (via C-terminus) with GRASP55/GORASP2. Interacts with CUL3 and with ubiquitinated proteins. Interacts with CRY1.

It localises to the cytoplasm. Its subcellular location is the cytosol. It is found in the nucleus. Its interaction with CUL3 suggests that it may act as a substrate adapter in some E3 ligase complex. Does not affect the function of Kv channel Kv2.1/KCNB1, Kv1.2/KCNA2, Kv4.2/KCND2 and Kv3.4/KCNC4. This is BTB/POZ domain-containing protein KCTD5 (KCTD5) from Bos taurus (Bovine).